The chain runs to 473 residues: Aspartyl/glutamyl-tRNA(Asn/Gln) amidotransferase subunit B (473 aa).

This sequence belongs to the GatB/GatE family. GatB subfamily. In terms of assembly, heterotrimer of A, B and C subunits.

The enzyme catalyses L-glutamyl-tRNA(Gln) + L-glutamine + ATP + H2O = L-glutaminyl-tRNA(Gln) + L-glutamate + ADP + phosphate + H(+). It catalyses the reaction L-aspartyl-tRNA(Asn) + L-glutamine + ATP + H2O = L-asparaginyl-tRNA(Asn) + L-glutamate + ADP + phosphate + 2 H(+). Its function is as follows. Allows the formation of correctly charged Asn-tRNA(Asn) or Gln-tRNA(Gln) through the transamidation of misacylated Asp-tRNA(Asn) or Glu-tRNA(Gln) in organisms which lack either or both of asparaginyl-tRNA or glutaminyl-tRNA synthetases. The reaction takes place in the presence of glutamine and ATP through an activated phospho-Asp-tRNA(Asn) or phospho-Glu-tRNA(Gln). The chain is Aspartyl/glutamyl-tRNA(Asn/Gln) amidotransferase subunit B from Finegoldia magna (strain ATCC 29328 / DSM 20472 / WAL 2508) (Peptostreptococcus magnus).